We begin with the raw amino-acid sequence, 62 residues long: UPF0339 protein Atu0232 (62 aa).

This sequence belongs to the UPF0339 family.

In Agrobacterium fabrum (strain C58 / ATCC 33970) (Agrobacterium tumefaciens (strain C58)), this protein is UPF0339 protein Atu0232.